Reading from the N-terminus, the 199-residue chain is dTTP/UTP pyrophosphatase (199 aa).

The active-site Proton acceptor is the Asp-75.

Belongs to the Maf family. YhdE subfamily. The cofactor is a divalent metal cation.

The protein resides in the cytoplasm. The catalysed reaction is dTTP + H2O = dTMP + diphosphate + H(+). The enzyme catalyses UTP + H2O = UMP + diphosphate + H(+). Nucleoside triphosphate pyrophosphatase that hydrolyzes dTTP and UTP. May have a dual role in cell division arrest and in preventing the incorporation of modified nucleotides into cellular nucleic acids. This Methylobacillus flagellatus (strain ATCC 51484 / DSM 6875 / VKM B-1610 / KT) protein is dTTP/UTP pyrophosphatase.